We begin with the raw amino-acid sequence, 61 residues long: TICYSHTTTSRAILKDCGENSCYRKSRRHPPKMVLGRGCGCPPGDDYLEVKCCTSPDKCNY.

4 disulfide bridges follow: Cys3–Cys22, Cys17–Cys39, Cys41–Cys52, and Cys53–Cys59.

The protein belongs to the three-finger toxin family. Short-chain subfamily. Acn-esterase inhibitor sub-subfamily. In terms of tissue distribution, expressed by the venom gland.

Its subcellular location is the secreted. Inhibits acetylcholinesterase. The polypeptide is Acetylcholinesterase toxin C (Dendroaspis polylepis polylepis (Black mamba)).